The chain runs to 407 residues: Aurofusarin biosynthesis cluster protein S (407 aa).

A signal peptide spans 1–35 (MSKQKPSLWRALRALSFIISIPLLIQYLVLKWYST). N-linked (GlcNAc...) asparagine glycans are attached at residues Asn52, Asn174, Asn196, Asn274, and Asn312. FAS1 domains lie at 52–192 (NLTV…DTVL) and 195–365 (PNST…DSIL).

Might be part of an extracellular enzyme complex composed of GIP1, aurF, aurO and aurS.

The protein localises to the secreted. It is found in the extracellular space. It functions in the pathway pigment biosynthesis. Its function is as follows. Part of the gene cluster that mediates the biosynthesis of aurofusarin, a red mycelium pigment which is acting as a mycotoxin. The first step is performed by the polyketide synthase which condenses one acetyl-CoA and 6 malonyl-CoA units to form the first intermediate, the cyclic heptaketide and yellow pigment YWA1. The C2 hydroxyl group in the pyrone ring of YWA1 is probably formed during ring closure by an aldol-type cyclization reaction. The dehydratase aurZ then acts as the first tailoring enzyme in the aurofusarin biosynthetic pathway by converting YWA1 to nor-rubrofusarin. Nor-rubrofusarin is then methylated to rubrofusarin by the O-methyltransferase aurJ. Rubrofusarin is then transported across the plasma membrane by the rubrofusarin-specific pump aurT for further enzymatic processing by the extracellular complex composed of GIP1, aurF, aurO and aurS to yield aurofusarin. This Gibberella zeae (strain ATCC MYA-4620 / CBS 123657 / FGSC 9075 / NRRL 31084 / PH-1) (Wheat head blight fungus) protein is Aurofusarin biosynthesis cluster protein S.